The following is a 139-amino-acid chain: Actin-depolymerizing factor 1 (139 aa).

In terms of domain architecture, ADF-H spans 5-139 (SSGLAVNDEC…SLDIVRSRTN (135 aa)).

Belongs to the actin-binding proteins ADF family. Expressed in pollen.

Functionally, actin-depolymerizing protein. Severs actin filaments (F-actin) and binds to actin monomers. This is Actin-depolymerizing factor 1 (ADF1) from Zea mays (Maize).